The primary structure comprises 154 residues: ATP synthase subunit b', chloroplastic (154 aa).

Residues 22 to 42 (GTLPLIAIQFLILMFLLNILL) traverse the membrane as a helical segment.

Belongs to the ATPase B chain family. As to quaternary structure, F-type ATPases have 2 components, F(1) - the catalytic core - and F(0) - the membrane proton channel. F(1) has five subunits: alpha(3), beta(3), gamma(1), delta(1), epsilon(1). F(0) has four main subunits: a(1), b(1), b'(1) and c(10-14). The alpha and beta chains form an alternating ring which encloses part of the gamma chain. F(1) is attached to F(0) by a central stalk formed by the gamma and epsilon chains, while a peripheral stalk is formed by the delta, b and b' chains.

It localises to the plastid. The protein resides in the chloroplast thylakoid membrane. Its function is as follows. F(1)F(0) ATP synthase produces ATP from ADP in the presence of a proton or sodium gradient. F-type ATPases consist of two structural domains, F(1) containing the extramembraneous catalytic core and F(0) containing the membrane proton channel, linked together by a central stalk and a peripheral stalk. During catalysis, ATP synthesis in the catalytic domain of F(1) is coupled via a rotary mechanism of the central stalk subunits to proton translocation. Functionally, component of the F(0) channel, it forms part of the peripheral stalk, linking F(1) to F(0). The b'-subunit is a diverged and duplicated form of b found in plants and photosynthetic bacteria. This Vaucheria litorea (Yellow-green alga) protein is ATP synthase subunit b', chloroplastic.